A 178-amino-acid chain; its full sequence is ATP-dependent protease subunit HslV (178 aa).

The active site involves Thr7. 3 residues coordinate Na(+): Gly162, Cys165, and Thr168.

This sequence belongs to the peptidase T1B family. HslV subfamily. As to quaternary structure, a double ring-shaped homohexamer of HslV is capped on each side by a ring-shaped HslU homohexamer. The assembly of the HslU/HslV complex is dependent on binding of ATP.

The protein resides in the cytoplasm. The catalysed reaction is ATP-dependent cleavage of peptide bonds with broad specificity.. With respect to regulation, allosterically activated by HslU binding. Protease subunit of a proteasome-like degradation complex believed to be a general protein degrading machinery. The chain is ATP-dependent protease subunit HslV from Cupriavidus pinatubonensis (strain JMP 134 / LMG 1197) (Cupriavidus necator (strain JMP 134)).